The following is a 245-amino-acid chain: Large ribosomal subunit protein uL29m (245 aa).

Composition is skewed to low complexity over residues 36–49 (SFNS…TSSS) and 234–245 (STKSETTTSKNI). Disordered regions lie at residues 36–98 (SFNS…NPDH) and 207–245 (RPSP…SKNI).

This sequence belongs to the universal ribosomal protein uL29 family. In terms of assembly, component of the mitochondrial large ribosomal subunit. Mature mitochondrial ribosomes consist of a small (37S) and a large (54S) subunit. The 37S subunit contains at least 33 different proteins and 1 molecule of RNA (15S). The 54S subunit contains at least 45 different proteins and 1 molecule of RNA (21S).

It is found in the mitochondrion. The protein is Large ribosomal subunit protein uL29m (MRPL4) of Coccidioides immitis (strain RS) (Valley fever fungus).